Consider the following 326-residue polypeptide: Meso-diaminopimelate D-dehydrogenase (326 aa).

Residues 11–14 (YGNL), 35–37 (TRR), 69–72 (CGGS), 92–94 (SFD), and 121–125 (VGWDP) contribute to the NADP(+) site. Residues Asp-94, Asp-124, Trp-148, 154 to 155 (QG), Thr-173, Arg-199, His-249, and Asn-276 each bind substrate.

Belongs to the diaminopimelate dehydrogenase family. As to quaternary structure, homodimer.

It catalyses the reaction meso-2,6-diaminopimelate + NADP(+) + H2O = (S)-2-amino-6-oxoheptanedioate + NH4(+) + NADPH + H(+). It participates in amino-acid biosynthesis; L-lysine biosynthesis via DAP pathway; DL-2,6-diaminopimelate from (S)-tetrahydrodipicolinate: step 1/1. The enzyme is completely inhibited by p-chloromercuribenzoate and HgCl(2) in vitro. Thioglycollate, L-cysteine and Cu(2+) also strongly inhibit the enzyme. Its function is as follows. Catalyzes the reversible NADPH-dependent reductive amination of L-2-amino-6-oxopimelate, the acyclic form of L-tetrahydrodipicolinate, to generate the meso compound, D,L-2,6-diaminopimelate. Probably plays a role in lysine biosynthesis. Is highly specific for meso-2,6-diaminopimelate as the electron donor, since the following amino acids are inert for the oxidative deamination reaction: DL-2-aminopimelate, D-glutamate, L-glutamate, D-aspartate, L-aspartate, D-alanine, L-alanine, D-valine, L-valine, D-lysine, L-lysine, D-phenylalanine, L-phenylalanine, D-leucine, L-leucine, D-threonine, L-threonine, D-serine, L-serine, D-tryptophan, L-tryptophan, D-cysteine, L-cysteine, D-histidine, L-histidine, D-methionine, D-arginine, D-proline, D-asparagine, D-glutamine, D-isoleucine and D-ornithine. Moreover, exclusively uses NADP as the electron acceptor for the oxidative deamination of meso-DAP; NAD is inert. The sequence is that of Meso-diaminopimelate D-dehydrogenase (ddh) from Ureibacillus thermosphaericus.